Reading from the N-terminus, the 541-residue chain is Chaperonin GroEL (541 aa).

Residues 29–32 (TLGP), 86–90 (DGTTT), G413, 477–479 (DAL), and D493 contribute to the ATP site.

The protein belongs to the chaperonin (HSP60) family. Forms a cylinder of 14 subunits composed of two heptameric rings stacked back-to-back. Interacts with the co-chaperonin GroES.

It is found in the cytoplasm. It carries out the reaction ATP + H2O + a folded polypeptide = ADP + phosphate + an unfolded polypeptide.. Together with its co-chaperonin GroES, plays an essential role in assisting protein folding. The GroEL-GroES system forms a nano-cage that allows encapsulation of the non-native substrate proteins and provides a physical environment optimized to promote and accelerate protein folding. This chain is Chaperonin GroEL, found in Clostridium botulinum (strain 657 / Type Ba4).